The primary structure comprises 65 residues: MSTKLKGPDGRIPDRLPDGTPAVSWERRWTEGSLPLWLVATVGGMAVLSVLGLFFFGSFTGVGSA.

The span at 1 to 17 (MSTKLKGPDGRIPDRLP) shows a compositional bias: basic and acidic residues. The tract at residues 1 to 20 (MSTKLKGPDGRIPDRLPDGT) is disordered. The chain crosses the membrane as a helical span at residues 36-56 (LWLVATVGGMAVLSVLGLFFF).

This sequence belongs to the PsbJ family. In terms of assembly, PSII is composed of 1 copy each of membrane proteins PsbA, PsbB, PsbC, PsbD, PsbE, PsbF, PsbH, PsbI, PsbJ, PsbK, PsbL, PsbM, PsbT, PsbX, PsbY, Psb30/Ycf12, peripheral proteins PsbO, CyanoQ (PsbQ), PsbU, PsbV and a large number of cofactors. It forms dimeric complexes.

Its subcellular location is the cellular thylakoid membrane. Its function is as follows. One of the components of the core complex of photosystem II (PSII). PSII is a light-driven water:plastoquinone oxidoreductase that uses light energy to abstract electrons from H(2)O, generating O(2) and a proton gradient subsequently used for ATP formation. It consists of a core antenna complex that captures photons, and an electron transfer chain that converts photonic excitation into a charge separation. The protein is Photosystem II reaction center protein J of Prochlorococcus marinus (strain MIT 9303).